A 120-amino-acid chain; its full sequence is Eukaryotic translation initiation factor 4E-binding protein 2 (120 aa).

2 positions are modified to phosphothreonine; by MTOR: Thr37 and Thr46. The YXXXXLphi motif signature appears at 54-60 (YDRKFLL). Ser65 is modified (phosphoserine; by MTOR). Position 70 is a phosphothreonine; by MTOR (Thr70). Ser83 carries the post-translational modification Phosphoserine. A deamidated asparagine mark is found at Asn99 and Asn102. A TOS motif motif is present at residues 116–120 (FEMDI).

Belongs to the eIF4E-binding protein family. As to quaternary structure, hypophosphorylated EIF4EBP2 interacts with EIF4E; phosphorylation of EIF4EBP2 by mTORC1 causes dissociation of the complex allowing EIF4G1/EIF4G3 to bind and consequent initiation of translation. Interacts (via TOS motif) with RPTOR; promoting phosphorylation by mTORC1. Interacts with PCMT1; required to prevent isoaspartate accumulation and convert isoaspartate to Asp. Post-translationally, phosphorylation at Thr-37, Thr-46, Ser-65, Thr-70 and Ser-83 is mediated by MTOR and corresponds to the hyperphosphorylated form: it abolishes binding to EIF4E by inducing folding of intrinsically disordered regions. First phosphorylated at Thr-37 and Thr-46 by MTOR, inducing folding of region encompassing residues from Pro-18 to Arg-62 of into a four-stranded beta-domain that sequesters the helical YXXXXLPhi motif into a partly buried beta-strand, blocking accessibility to EIF4E. Protein phosphorylated at Thr-37 and Thr-46 is however unstable and subsequent phosphorylation at Ser-65, Thr-70 and Ser-83 is required to stabilize the fold, decreasing affinity for EIF4E by a factor of 4000. Phosphorylated in response to insulin, EGF and PDGF. In terms of processing, deamidated at Asn-99 and Asn-102 to aspartate (Asp) in brain. Deamidation promotes interaction with RPTOR, subsequent phosphorylation by mTORC1 and increased translation, leading to impair kinetics of excitatory synaptic transmission. Deamidation takes place during postnatal development, when the PI3K-Akt-mTOR signaling is reduced, suggesting it acts as a compensatory mechanism to promote translation despite attenuated PI3K-Akt-mTOR signaling in neuron development. Deamidation converts Asn residues into a mixture of Asp and isoaspartate; interactions with PCMT1 is required to prevent isoaspartate accumulation and convert isoaspartate to Asp. As to expression, enriched in brain.

It localises to the cytoplasm. Its subcellular location is the nucleus. Functionally, repressor of translation initiation involved in synaptic plasticity, learning and memory formation. Regulates EIF4E activity by preventing its assembly into the eIF4F complex: hypophosphorylated form of EIF4EBP2 competes with EIF4G1/EIF4G3 and strongly binds to EIF4E, leading to repress translation. In contrast, hyperphosphorylated form dissociates from EIF4E, allowing interaction between EIF4G1/EIF4G3 and EIF4E, leading to initiation of translation. EIF4EBP2 is enriched in brain and acts as a regulator of synapse activity and neuronal stem cell renewal via its ability to repress translation initiation. Mediates the regulation of protein translation by hormones, growth factors and other stimuli that signal through the MAP kinase and mTORC1 pathways. This chain is Eukaryotic translation initiation factor 4E-binding protein 2, found in Mus musculus (Mouse).